A 497-amino-acid chain; its full sequence is Cobyric acid synthase (497 aa).

The region spanning 250–445 (EVTIAVIRLP…LHGIFNNGPW (196 aa)) is the GATase cobBQ-type domain. Cys-331 acts as the Nucleophile in catalysis. His-437 is an active-site residue.

It belongs to the CobB/CobQ family. CobQ subfamily.

It participates in cofactor biosynthesis; adenosylcobalamin biosynthesis. Its function is as follows. Catalyzes amidations at positions B, D, E, and G on adenosylcobyrinic A,C-diamide. NH(2) groups are provided by glutamine, and one molecule of ATP is hydrogenolyzed for each amidation. This Acaryochloris marina (strain MBIC 11017) protein is Cobyric acid synthase.